The chain runs to 452 residues: Prenyltransferase fsdK (452 aa).

Belongs to the tryptophan dimethylallyltransferase family.

Its pathway is mycotoxin biosynthesis. Its function is as follows. Prenyltransferase; part of the gene cluster that mediates the biosynthesis of fusaridione A, a bright yellow trans-fused decalin-containing tetramic acid with antimicrobial activity. The PKS module of fsdS catalyzes the formation of the polyketide unit which is then conjugated to L-tyrosine by the condensation domain of the fsdS NRPS module. Activity of the Dieckmann cyclase domain (RED) results in release of the intermediate fusaridione A. The unstable pyrrolidinedione ring of fusaridione A is opened through a reverse-Dieckmann reaction to afford its ring-opened form. In Fusarium heterosporum, this protein is Prenyltransferase fsdK.